Reading from the N-terminus, the 445-residue chain is Phosphoglucosamine mutase (445 aa).

Serine 102 (phosphoserine intermediate) is an active-site residue. Mg(2+) is bound by residues serine 102, aspartate 241, aspartate 243, and aspartate 245. Phosphoserine is present on serine 102.

It belongs to the phosphohexose mutase family. The cofactor is Mg(2+). In terms of processing, activated by phosphorylation.

It catalyses the reaction alpha-D-glucosamine 1-phosphate = D-glucosamine 6-phosphate. Catalyzes the conversion of glucosamine-6-phosphate to glucosamine-1-phosphate. The protein is Phosphoglucosamine mutase of Pectobacterium carotovorum subsp. carotovorum (strain PC1).